The following is a 470-amino-acid chain: Glutamate--tRNA ligase (470 aa).

The 'HIGH' region motif lies at 9-19; it reads PSPTGFLHVGG. A 'KMSKS' region motif is present at residues 236–240; it reads KLSKR. Lysine 239 is a binding site for ATP.

Belongs to the class-I aminoacyl-tRNA synthetase family. Glutamate--tRNA ligase type 1 subfamily. In terms of assembly, monomer.

The protein resides in the cytoplasm. The catalysed reaction is tRNA(Glu) + L-glutamate + ATP = L-glutamyl-tRNA(Glu) + AMP + diphosphate. In terms of biological role, catalyzes the attachment of glutamate to tRNA(Glu) in a two-step reaction: glutamate is first activated by ATP to form Glu-AMP and then transferred to the acceptor end of tRNA(Glu). In Psychromonas ingrahamii (strain DSM 17664 / CCUG 51855 / 37), this protein is Glutamate--tRNA ligase.